The primary structure comprises 92 residues: LYR motif-containing protein 4 homolog (92 aa).

Residues 48 to 68 (AEIDRQMAEGQQNLELIRRQV) adopt a coiled-coil conformation.

This sequence belongs to the complex I LYR family. As to quaternary structure, component of the mitochondrial core iron-sulfur cluster (ISC) assembly complex at least composed of the cysteine desulfurase Nfs1, the scaffold protein IscU, the accessory protein bcn92/Isd11/Lyrm4, and probably fh/frataxin. Interacts with Nfs1.

The protein resides in the mitochondrion. Its function is as follows. Stabilizing factor of the core iron-sulfur cluster (ISC) assembly complex that regulates the stability and cysteine desulfurase activity of Nfs1 and participates in the [2Fe-2S] clusters assembly on the scaffolding protein IscU. The sequence is that of LYR motif-containing protein 4 homolog from Drosophila melanogaster (Fruit fly).